The chain runs to 86 residues: MATDAQMAQVAELEVEMMSDMYRRMTNSCQAKCIATAFRESELTKGEAVCLDRCVAKYLDVHEKLGKRLTSMSQGDEAALQKIAQQ.

The Twin CX3C motif motif lies at 29–54 (CQAKCIATAFRESELTKGEAVCLDRC). 2 cysteine pairs are disulfide-bonded: cysteine 29–cysteine 54 and cysteine 33–cysteine 50.

The protein belongs to the small Tim family. In terms of assembly, heterohexamer; composed of 3 copies of tim-9/tin-9.1 and 3 copies of tim-10/tin-10, named soluble 70 kDa complex. The complex associates with the tim-22 component of the TIM22 complex. Interacts with multi-pass transmembrane proteins in transit.

It is found in the mitochondrion inner membrane. Mitochondrial intermembrane chaperone that participates in the import and insertion of multi-pass transmembrane proteins into the mitochondrial inner membrane. May also be required for the transfer of beta-barrel precursors from the TOM complex to the sorting and assembly machinery (SAM complex) of the outer membrane. Acts as a chaperone-like protein that protects the hydrophobic precursors from aggregation and guide them through the mitochondrial intermembrane space. This is Mitochondrial import inner membrane translocase subunit Tim10 (tin-10) from Caenorhabditis elegans.